Consider the following 86-residue polypeptide: Large ribosomal subunit protein bL31B (86 aa).

It belongs to the bacterial ribosomal protein bL31 family. Type B subfamily. Part of the 50S ribosomal subunit.

In Vibrio vulnificus (strain YJ016), this protein is Large ribosomal subunit protein bL31B.